The chain runs to 353 residues: Aromatic amino acid aminotransferase (353 aa).

K217 is subject to N6-(pyridoxal phosphate)lysine.

Belongs to the class-II pyridoxal-phosphate-dependent aminotransferase family. In terms of assembly, homodimer. Pyridoxal 5'-phosphate is required as a cofactor.

The enzyme catalyses an aromatic L-alpha-amino acid + 2-oxoglutarate = an aromatic oxo-acid + L-glutamate. Aminotransferase that catalyzes the conversion of aromatic amino acids and 2-oxoglutarate into corresponding aromatic oxo acids and L-glutamate. The sequence is that of Aromatic amino acid aminotransferase from Mycobacterium tuberculosis (strain ATCC 25177 / H37Ra).